We begin with the raw amino-acid sequence, 413 residues long: Putative F-box/kelch-repeat protein At3g22870 (413 aa).

One can recognise an F-box domain in the interval 2-53 (TLTISDLPRDLKKKIFSRIPLRYVRALRLTCKEWETLIKSRSLKIDEEESQM). Kelch repeat units lie at residues 156 to 202 (LLRF…IGVS) and 331 to 379 (KVFI…RRRQ).

In Arabidopsis thaliana (Mouse-ear cress), this protein is Putative F-box/kelch-repeat protein At3g22870.